Here is a 230-residue protein sequence, read N- to C-terminus: CRP-like protein Clp (230 aa).

Residue 18-139 (PSLALDAGTI…APKILYAIGV (122 aa)) participates in a nucleoside 3',5'-cyclic phosphate binding. The 73-residue stretch at 158 to 230 (LDVTDRIVRT…GKTVVLYGTR (73 aa)) folds into the HTH crp-type domain. The segment at residues 190-209 (RQELARLVGCSREMAGRVLK) is a DNA-binding region (H-T-H motif).

In terms of assembly, homodimer.

It localises to the cytoplasm. With respect to regulation, allosterically inhibited by cyclic di-GMP (c-di-GMP), which binds to Clp and abolishes its ability to bind its target gene promoter. Its function is as follows. Global transcriptional regulator that regulates virulence factors production by activating or repressing the expression of a large set of genes in diffusible signal factor (DSF) pathway. The protein is CRP-like protein Clp (clp) of Xanthomonas axonopodis pv. citri (strain 306).